The primary structure comprises 199 residues: V-type ATP synthase subunit E (199 aa).

Belongs to the V-ATPase E subunit family.

Produces ATP from ADP in the presence of a proton gradient across the membrane. The sequence is that of V-type ATP synthase subunit E from Borreliella afzelii (strain PKo) (Borrelia afzelii).